Reading from the N-terminus, the 357-residue chain is Probable GTP 3',8-cyclase (357 aa).

Positions Asp5–Arg234 constitute a Radical SAM core domain. Arg14 is a binding site for GTP. [4Fe-4S] cluster contacts are provided by Cys21 and Cys25. Tyr27 is an S-adenosyl-L-methionine binding site. Cys28 contacts [4Fe-4S] cluster. Lys68 contributes to the GTP binding site. Gly72 provides a ligand contact to S-adenosyl-L-methionine. Thr96 contributes to the GTP binding site. An S-adenosyl-L-methionine-binding site is contributed by Ser120. Lys157 contacts GTP. Residues Ser232–Asp256 form a disordered region. [4Fe-4S] cluster-binding residues include Cys272 and Cys275. Arg277 to Arg279 is a binding site for GTP. Cys289 lines the [4Fe-4S] cluster pocket.

The protein belongs to the radical SAM superfamily. MoaA family. It depends on [4Fe-4S] cluster as a cofactor.

The enzyme catalyses GTP + AH2 + S-adenosyl-L-methionine = (8S)-3',8-cyclo-7,8-dihydroguanosine 5'-triphosphate + 5'-deoxyadenosine + L-methionine + A + H(+). It participates in cofactor biosynthesis; molybdopterin biosynthesis. Its function is as follows. Catalyzes the cyclization of GTP to (8S)-3',8-cyclo-7,8-dihydroguanosine 5'-triphosphate. In Halobacterium salinarum (strain ATCC 29341 / DSM 671 / R1), this protein is Probable GTP 3',8-cyclase.